A 398-amino-acid chain; its full sequence is Lysophospholipid transporter LplT (398 aa).

A run of 12 helical transmembrane segments spans residues 16-36, 53-73, 91-111, 139-159, 163-183, 195-213, 227-247, 253-273, 286-306, 310-330, 344-364, and 372-392; these read MIAV…LLFA, ILQM…GQVA, AGAL…LVGV, LMEA…GILA, IVAA…ANLY, SWTP…VVLW, LFWG…PVAL, ATPT…AGAA, MPAG…TTLF, ALLL…NALL, IAVQ…LYSL, and VVGV…ALWL.

This sequence belongs to the major facilitator superfamily. LplT (TC 2.A.1.42) family.

It is found in the cell inner membrane. Catalyzes the facilitated diffusion of 2-acyl-glycero-3-phosphoethanolamine (2-acyl-GPE) into the cell. This chain is Lysophospholipid transporter LplT, found in Serratia proteamaculans (strain 568).